The primary structure comprises 187 residues: Guanylate kinase (187 aa).

Positions 5–183 (GRLTVLTGPS…ALKQLETHMQ (179 aa)) constitute a Guanylate kinase-like domain. 12–19 (GPSGVGKG) contacts ATP.

It belongs to the guanylate kinase family.

Its subcellular location is the cytoplasm. The enzyme catalyses GMP + ATP = GDP + ADP. It carries out the reaction dZMP + ATP = dZDP + ADP. Its pathway is purine metabolism. Its function is as follows. Essential for recycling GMP and indirectly, cGMP. In terms of biological role, (Microbial infection) Catalyzes the phosphorylation of dZMP to dZDP, when the bacterium is infected by a phage that produces the substrate for the synthesis of dZTP (2- amino-2'-deoxyadenosine 5'-triphosphate), which is then used by the phage as a DNA polymerase substrate. This chain is Guanylate kinase, found in Synechococcus sp. (strain CC9902).